The primary structure comprises 80 residues: Putative membrane protein insertion efficiency factor (80 aa).

The protein belongs to the UPF0161 family.

The protein resides in the cell inner membrane. Its function is as follows. Could be involved in insertion of integral membrane proteins into the membrane. This is Putative membrane protein insertion efficiency factor from Syntrophobacter fumaroxidans (strain DSM 10017 / MPOB).